The chain runs to 302 residues: Aspartate carbamoyltransferase catalytic subunit (302 aa).

Carbamoyl phosphate contacts are provided by R53 and T54. K82 contributes to the L-aspartate binding site. Carbamoyl phosphate-binding residues include R103, H131, and Q134. Residues R164 and R223 each coordinate L-aspartate. L260 and P261 together coordinate carbamoyl phosphate.

Belongs to the aspartate/ornithine carbamoyltransferase superfamily. ATCase family. In terms of assembly, heterooligomer of catalytic and regulatory chains.

It catalyses the reaction carbamoyl phosphate + L-aspartate = N-carbamoyl-L-aspartate + phosphate + H(+). Its pathway is pyrimidine metabolism; UMP biosynthesis via de novo pathway; (S)-dihydroorotate from bicarbonate: step 2/3. Catalyzes the condensation of carbamoyl phosphate and aspartate to form carbamoyl aspartate and inorganic phosphate, the committed step in the de novo pyrimidine nucleotide biosynthesis pathway. The chain is Aspartate carbamoyltransferase catalytic subunit from Methanococcus maripaludis (strain DSM 14266 / JCM 13030 / NBRC 101832 / S2 / LL).